We begin with the raw amino-acid sequence, 492 residues long: UDP-N-acetylmuramoyl-L-alanyl-D-glutamate--2,6-diaminopimelate ligase (492 aa).

Residue Ser30 coordinates UDP-N-acetyl-alpha-D-muramoyl-L-alanyl-D-glutamate. 114-120 (GTNGKTS) is an ATP binding site. Residues 156–157 (TT), Ser183, Gln189, and Arg191 contribute to the UDP-N-acetyl-alpha-D-muramoyl-L-alanyl-D-glutamate site. Residue Lys223 is modified to N6-carboxylysine. Residues Arg389, 413–416 (DNPR), Gly462, and Glu466 each bind meso-2,6-diaminopimelate. The Meso-diaminopimelate recognition motif signature appears at 413-416 (DNPR).

This sequence belongs to the MurCDEF family. MurE subfamily. The cofactor is Mg(2+). Carboxylation is probably crucial for Mg(2+) binding and, consequently, for the gamma-phosphate positioning of ATP.

It is found in the cytoplasm. The catalysed reaction is UDP-N-acetyl-alpha-D-muramoyl-L-alanyl-D-glutamate + meso-2,6-diaminopimelate + ATP = UDP-N-acetyl-alpha-D-muramoyl-L-alanyl-gamma-D-glutamyl-meso-2,6-diaminopimelate + ADP + phosphate + H(+). The protein operates within cell wall biogenesis; peptidoglycan biosynthesis. Catalyzes the addition of meso-diaminopimelic acid to the nucleotide precursor UDP-N-acetylmuramoyl-L-alanyl-D-glutamate (UMAG) in the biosynthesis of bacterial cell-wall peptidoglycan. This is UDP-N-acetylmuramoyl-L-alanyl-D-glutamate--2,6-diaminopimelate ligase from Neisseria meningitidis serogroup A / serotype 4A (strain DSM 15465 / Z2491).